The chain runs to 417 residues: Dibenzothiophene monooxygenase (417 aa).

The segment at 19 to 125 (DPVAVARGLA…LYTQIAQNNW (107 aa)) is helical N-terminus. FMN contacts are provided by residues Tyr-96, 129–134 (NASSEN), 159–163 (KHFCS), Arg-282, 369–370 (AR), and His-391. Positions 126-234 (WTGNASSENN…VEPDEVLGAP (109 aa)) are central beta-barrel N-terminus. The segment at 131–142 (SSENNSHELDVK) is lid loop. The tract at residues 235–409 (NAFVLAFIQS…DVGKHTLNGQ (175 aa)) is helical C-terminus.

It belongs to the DszC flavin monooxygenase family. Homotetramer.

Its subcellular location is the cytoplasm. It carries out the reaction dibenzothiophene + 2 FMNH2 + 2 O2 = dibenzothiophene 5,5-dioxide + 2 FMN + 2 H2O + 2 H(+). The enzyme catalyses dibenzothiophene + FMNH2 + O2 = dibenzothiophene 5-oxide + FMN + H2O + H(+). The catalysed reaction is dibenzothiophene 5-oxide + FMNH2 + O2 = dibenzothiophene 5,5-dioxide + FMN + H2O + H(+). It functions in the pathway sulfur metabolism; dibenzothiophene degradation. Functionally, catalyzes the first step of the '4S' desulfurization pathway that removes covalently bound sulfur from dibenzothiophene (DBT) without breaking carbon-carbon bonds. Sulfur dioxygenase which converts DBT to DBT-sulfone (DBTO2 or DBT 5,5-dioxide) in a stepwise manner. The chain is Dibenzothiophene monooxygenase from Rhodococcus erythropolis (Arthrobacter picolinophilus).